The chain runs to 248 residues: Aspartate/glutamate leucyltransferase (248 aa).

The protein belongs to the R-transferase family. Bpt subfamily.

It localises to the cytoplasm. It catalyses the reaction N-terminal L-glutamyl-[protein] + L-leucyl-tRNA(Leu) = N-terminal L-leucyl-L-glutamyl-[protein] + tRNA(Leu) + H(+). The enzyme catalyses N-terminal L-aspartyl-[protein] + L-leucyl-tRNA(Leu) = N-terminal L-leucyl-L-aspartyl-[protein] + tRNA(Leu) + H(+). In terms of biological role, functions in the N-end rule pathway of protein degradation where it conjugates Leu from its aminoacyl-tRNA to the N-termini of proteins containing an N-terminal aspartate or glutamate. This is Aspartate/glutamate leucyltransferase from Methylobacterium sp. (strain 4-46).